We begin with the raw amino-acid sequence, 476 residues long: Glutamate mutase epsilon subunit (476 aa).

Position 62 (Arg-62) interacts with L-glutamate. Residue Gly-64 participates in adenosylcob(III)alamin binding. Position 96 (Arg-96) interacts with L-glutamate. Asn-119 is an adenosylcob(III)alamin binding site. Residues 145 to 146, Glu-167, and Tyr-173 each bind L-glutamate; that span reads RH. Pro-176 contributes to the adenosylcob(III)alamin binding site. Position 177 (Tyr-177) interacts with L-glutamate. Phe-289, Lys-318, and Glu-322 together coordinate adenosylcob(III)alamin.

Belongs to the methylaspartate mutase GlmE subunit family. In terms of assembly, heterotetramer composed of 2 epsilon subunits (GlmE) and 2 sigma subunits (GlmS). GlmE exists as a homodimer and GlmS as a monomer. Adenosylcob(III)alamin serves as cofactor.

The catalysed reaction is (2S,3S)-3-methyl-L-aspartate = L-glutamate. Its pathway is amino-acid degradation; L-glutamate degradation via mesaconate pathway; acetate and pyruvate from L-glutamate: step 1/4. Its function is as follows. Catalyzes the carbon skeleton rearrangement of L-glutamate to L-threo-3-methylaspartate ((2S,3S)-3-methylaspartate). The sequence is that of Glutamate mutase epsilon subunit from Halobacterium salinarum (strain ATCC 700922 / JCM 11081 / NRC-1) (Halobacterium halobium).